Consider the following 441-residue polypeptide: Mitochondrial inner membrane protein OXA1L (441 aa).

Topologically, residues 1–113 are mitochondrial intermembrane; it reads MALALMCGRR…QAAAEQSFAE (113 aa). A helical transmembrane segment spans residues 114–134; it reads LGLGSYTPVGLIQNLLEFMHV. At 135 to 139 the chain is on the mitochondrial matrix side; the sequence is NLGLP. Residues 140–160 form a helical membrane-spanning segment; it reads WWGAIAACTVLARCLVFPLIV. Over 161 to 212 the chain is Mitochondrial intermembrane; the sequence is KGQREAAKIHNHLPEIQKFSARIREAKLTGNHTEFYRASSEMTFYQKKHDIK. Residues 213–233 form a helical membrane-spanning segment; sequence LFRPLILPLTQAPIFISFFIA. Over 234 to 260 the chain is Mitochondrial matrix; the sequence is LREMANLPVPSLQTGGLWWFQDLTLSD. Residues 261–281 traverse the membrane as a helical segment; it reads PIYVLPLVVTATMWGVLELGA. The Mitochondrial intermembrane segment spans residues 282–298; the sequence is ETGMQSSDLQWMRNFIR. Residues 299–319 traverse the membrane as a helical segment; that stretch reads LMPLAVLPITIHFPTAVFMYW. Residues 320-441 are Mitochondrial matrix-facing; that stretch reads LSSNMFSLGQ…SKQPWRDTLG (122 aa). Phosphoserine is present on serine 364. Threonine 400 is modified (phosphothreonine). The tract at residues 405-441 is disordered; it reads PLLQHGKNDPPNTPNSSSSSSSSNKAKSKQPWRDTLG. Low complexity predominate over residues 418-429; sequence PNSSSSSSSSNK.

Belongs to the OXA1/ALB3/YidC family. Monomer; predominantly monomeric at low salt concentrations. Homooligomer; predominantly homooligomeric at high salt concentrations. Associates with the mitochondrial ribosome. Associates preferentially as a dimer with the large ribosomal subunit 39S of the mitochondrial ribosome. Interacts with OXA1L; promoting cotranslational quality control in mitochondria.

The protein localises to the mitochondrion inner membrane. Its function is as follows. Mitochondrial membrane insertase that mediates the cotranslational insertion of integral membrane proteins into the mitochondrial inner membrane. Essential for the activity and assembly of cytochrome oxidase. Required for the correct biogenesis of ATP synthase and complex I in mitochondria. The sequence is that of Mitochondrial inner membrane protein OXA1L (OXA1L) from Bos taurus (Bovine).